The sequence spans 414 residues: Dual-specificity RNA methyltransferase RlmN (414 aa).

The segment covering 1–20 (MMSTPETATEATAPEAAPAP) has biased composition (low complexity). The tract at residues 1-24 (MMSTPETATEATAPEAAPAPSLGA) is disordered. Catalysis depends on glutamate 129, which acts as the Proton acceptor. Residues 135-385 (ESDRGTLCVS…VRTPRGRDIL (251 aa)) enclose the Radical SAM core domain. A disulfide bridge connects residues cysteine 142 and cysteine 388. Residues cysteine 149, cysteine 153, and cysteine 156 each coordinate [4Fe-4S] cluster. S-adenosyl-L-methionine contacts are provided by residues 214–215 (GE), serine 246, 268–270 (SLH), and asparagine 345. The active-site S-methylcysteine intermediate is cysteine 388.

This sequence belongs to the radical SAM superfamily. RlmN family. The cofactor is [4Fe-4S] cluster.

The protein localises to the cytoplasm. The catalysed reaction is adenosine(2503) in 23S rRNA + 2 reduced [2Fe-2S]-[ferredoxin] + 2 S-adenosyl-L-methionine = 2-methyladenosine(2503) in 23S rRNA + 5'-deoxyadenosine + L-methionine + 2 oxidized [2Fe-2S]-[ferredoxin] + S-adenosyl-L-homocysteine. It catalyses the reaction adenosine(37) in tRNA + 2 reduced [2Fe-2S]-[ferredoxin] + 2 S-adenosyl-L-methionine = 2-methyladenosine(37) in tRNA + 5'-deoxyadenosine + L-methionine + 2 oxidized [2Fe-2S]-[ferredoxin] + S-adenosyl-L-homocysteine. Its function is as follows. Specifically methylates position 2 of adenine 2503 in 23S rRNA and position 2 of adenine 37 in tRNAs. m2A2503 modification seems to play a crucial role in the proofreading step occurring at the peptidyl transferase center and thus would serve to optimize ribosomal fidelity. This Xanthobacter autotrophicus (strain ATCC BAA-1158 / Py2) protein is Dual-specificity RNA methyltransferase RlmN.